Reading from the N-terminus, the 187-residue chain is uncharacterized protein (187 aa).

The Tyr recombinase domain occupies 53–187 (RKPHIYSPAD…CLQTSYVVPG (135 aa)). Residues Arg-98 and Lys-123 contribute to the active site.

This sequence belongs to the 'phage' integrase family.

This is an uncharacterized protein from Sinorhizobium fredii (strain NBRC 101917 / NGR234).